Consider the following 227-residue polypeptide: Enolase-phosphatase E1 (227 aa).

Residues Asp11 and Glu13 each coordinate Mg(2+). Substrate-binding positions include 118–119 and Lys161; that span reads SS. Asp186 contributes to the Mg(2+) binding site.

It belongs to the HAD-like hydrolase superfamily. MasA/MtnC family. As to quaternary structure, monomer. Mg(2+) is required as a cofactor.

Its subcellular location is the cytoplasm. The protein localises to the nucleus. The catalysed reaction is 5-methylsulfanyl-2,3-dioxopentyl phosphate + H2O = 1,2-dihydroxy-5-(methylsulfanyl)pent-1-en-3-one + phosphate. Its pathway is amino-acid biosynthesis; L-methionine biosynthesis via salvage pathway; L-methionine from S-methyl-5-thio-alpha-D-ribose 1-phosphate: step 3/6. It participates in amino-acid biosynthesis; L-methionine biosynthesis via salvage pathway; L-methionine from S-methyl-5-thio-alpha-D-ribose 1-phosphate: step 4/6. Bifunctional enzyme that catalyzes the enolization of 2,3-diketo-5-methylthiopentyl-1-phosphate (DK-MTP-1-P) into the intermediate 2-hydroxy-3-keto-5-methylthiopentenyl-1-phosphate (HK-MTPenyl-1-P), which is then dephosphorylated to form the acireductone 1,2-dihydroxy-3-keto-5-methylthiopentene (DHK-MTPene). The sequence is that of Enolase-phosphatase E1 from Saccharomyces cerevisiae (strain JAY291) (Baker's yeast).